The following is a 340-amino-acid chain: Armadillo repeat-containing protein 12 (340 aa).

An interaction with TBC1D15 region spans residues 1–101 (MGKSIPQYLG…SITRCVYLLE (101 aa)). ARM repeat units lie at residues 100 to 139 (LEAE…AFSG), 179 to 218 (LPDY…YLAQ), and 278 to 318 (SLHE…SLQY).

Interacts with TBC1D15, TBC1D21, GK2 and IMMT. Interacts with VDAC2 and VDAC3 in a TBC1D21-dependent manner. Interacts (via ARM domains) with RBBP4. In terms of tissue distribution, expressed in testis. Highly expressed in the mid-piece of the elongated and late spermatids. Expressed at higher levels in neuroblastoma tissues and cell lines, than those of normal dorsal ganglia (at protein level). Expressed in breast cancer, colon cancer, hepatocellular carcinoma, lung cancer, pancreas cancer, prostate cancer, renal cancer and gastric cancer, but not in their normal counterparts.

It is found in the nucleus. The protein localises to the mitochondrion outer membrane. Essential for male fertility and sperm mitochondrial sheath formation. Required for proper mitochondrial elongation and coiling along the flagellum during the formation of the mitochondrial sheath. Facilitates the growth and aggressiveness of neuroblastoma cells. Increases the EZH2 activity and H3K27me3 levels in a RBBP4-dependent manner, and facilitates the enrichment of polycomb repressive complex 2 and H3K27me3 on gene promoters, resulting in transcriptional repression of tumor suppressors affecting the proliferation, invasion, and metastasis of tumor cells. In Homo sapiens (Human), this protein is Armadillo repeat-containing protein 12 (ARMC12).